A 215-amino-acid polypeptide reads, in one-letter code: Probable phosphoglycerate mutase GpmB (215 aa).

Substrate contacts are provided by residues 8–15, 21–22, R58, R60, 82–85, and 151–152; these read RHGETLWN, QG, ELNM, and GM. H9 (tele-phosphohistidine intermediate) is an active-site residue. Catalysis depends on E82, which acts as the Proton donor/acceptor.

This sequence belongs to the phosphoglycerate mutase family. GpmB subfamily.

The enzyme catalyses (2R)-2-phosphoglycerate = (2R)-3-phosphoglycerate. It functions in the pathway carbohydrate degradation; glycolysis; pyruvate from D-glyceraldehyde 3-phosphate: step 3/5. This chain is Probable phosphoglycerate mutase GpmB, found in Erwinia tasmaniensis (strain DSM 17950 / CFBP 7177 / CIP 109463 / NCPPB 4357 / Et1/99).